The following is a 301-amino-acid chain: Tyrosine recombinase XerC (301 aa).

Positions 1–89 (MGLDGLAAYL…SWRQYCVWLV (89 aa)) constitute a Core-binding (CB) domain. The 181-residue stretch at 110–290 (RVPKALPQEW…DFDHIARLYD (181 aa)) folds into the Tyr recombinase domain. Residues arginine 151, lysine 175, histidine 242, arginine 245, and histidine 268 contribute to the active site. The active-site O-(3'-phospho-DNA)-tyrosine intermediate is the tyrosine 277.

The protein belongs to the 'phage' integrase family. XerC subfamily. Forms a cyclic heterotetrameric complex composed of two molecules of XerC and two molecules of XerD.

The protein localises to the cytoplasm. In terms of biological role, site-specific tyrosine recombinase, which acts by catalyzing the cutting and rejoining of the recombining DNA molecules. The XerC-XerD complex is essential to convert dimers of the bacterial chromosome into monomers to permit their segregation at cell division. It also contributes to the segregational stability of plasmids. This chain is Tyrosine recombinase XerC, found in Neisseria meningitidis serogroup B (strain ATCC BAA-335 / MC58).